The primary structure comprises 198 residues: MARCKS-related protein (198 aa).

The interval 1–198 is disordered; the sequence is MGSQSSKAPR…DPAPASEQNE (198 aa). Gly-2 carries the N-myristoyl glycine lipid modification. Thr-14 carries the phosphothreonine modification. A phosphoserine mark is found at Ser-22, Ser-36, Ser-41, and Ser-48. Positions 53-62 are enriched in low complexity; sequence GTEEAAGATG. Ser-71 carries the post-translational modification Phosphoserine. The segment covering 76 to 85 has biased composition (basic and acidic residues); sequence AKGEVPPKET. Residue Thr-85 is modified to Phosphothreonine. Basic residues predominate over residues 86 to 98; it reads PKKKKKFSFKKPF. Positions 87 to 110 are effector domain involved in lipid-binding and calmodulin-binding; that stretch reads KKKKKFSFKKPFKLSGLSFKRNRK. Residues Ser-93, Ser-101, and Ser-104 each carry the phosphoserine; by PKC modification. At Ser-119 the chain carries Phosphoserine. At Ser-120 the chain carries Phosphoserine; by MAPK8. Residue Ser-132 is modified to Phosphoserine. Residue Thr-148 is modified to Phosphothreonine; by MAPK8. Residues Ser-151 and Ser-162 each carry the phosphoserine modification. The span at 156–167 shows a compositional bias: low complexity; it reads AKGAEASAAAKG. Thr-170 is subject to Phosphothreonine. The residue at position 182 (Thr-182) is a Phosphothreonine; by MAPK8.

It belongs to the MARCKS family. As to quaternary structure, binds to filamentous actin (F-actin), but not to monomeric G-actin, independently of its phosphorylation status. Interacts with calmodulin. In terms of processing, phosphorylated. Phosphorylation at Ser-120 and Thr-182 is non-redundantly catalyzed by MAPK8 in vivo. Phosphorylation at Thr-148 is preferentially catalyzed by MAPK8 in vivo, but this modification can also be catalyzed by other kinases in the absence of MAPK8. May be phosphorylated by protein kinase C, which disrupts the interaction with calmodulin.

Its subcellular location is the cytoplasm. The protein resides in the cytoskeleton. It localises to the cell membrane. Its function is as follows. Controls cell movement by regulating actin cytoskeleton homeostasis and filopodium and lamellipodium formation. When unphosphorylated, induces cell migration. When phosphorylated by MAPK8, induces actin bundles formation and stabilization, thereby reducing actin plasticity, hence restricting cell movement, including neuronal migration. May be involved in coupling the protein kinase C and calmodulin signal transduction systems. This Bos taurus (Bovine) protein is MARCKS-related protein (MARCKSL1).